The chain runs to 385 residues: Isomaltose glucohydrolase (385 aa).

Residue tryptophan 125 participates in substrate binding. The active-site Proton acceptor is the aspartate 175. Catalysis depends on glutamate 178, which acts as the Proton donor. Glutamate 335 (proton acceptor) is an active-site residue.

Belongs to the glycosyl hydrolase 15 family.

It localises to the cytoplasm. It catalyses the reaction isomaltose + H2O = beta-D-glucose + D-glucose. Its function is as follows. Involved in the intracellular degradation of the cyclic tetrasaccharide cyclobis-(1-6)-alpha-nigerosyl (CNN) formed extracellularly from starch. Catalyzes the hydrolysis of alpha-1,6-glucosidic linkage from the non-reducing end of isomaltose to yield beta-D-glucose and D-glucose. Can also act on panose and isomaltotriose at a lower rate. It displays low or no activity toward CNN and the general GH15 enzyme substrates such as maltose, soluble starch or dextran. This is Isomaltose glucohydrolase from Kribbella flavida (strain DSM 17836 / JCM 10339 / NBRC 14399).